Consider the following 467-residue polypeptide: MPSVFIKTFGCQMNVRDSEQVLQDFIERGYQIASSEKWADIILINTCSVRAMAEEKAIDKLASLKTAKKKNPNLVLGIIGCMAQNRGREIAEKYRFVDLVLGTQKFHKVAEIADNLLKNPDRSSSYVDLSKEEAAHNAINKHLSTKAQPIAYVSIMQGCSMHCSFCIVPTTRGEERSRPIDEIFEEVKRLAETSVKEIVLLGQIVNRYGAKEFPWVKGKSPFVQLLEKLSTIEEIKRIRFTSPHPLGFKEDLIAALRDIPQLCEHVHLPVQSGSDKILKAMRRGYSRSKFLSLVDKLRKAIPQLALSTDIIVGYPGETEEDFQQTCSLLNEVRFDNAFIFRYSAREGTTAASLGDQLSEEVKFERNYRLLEIQNKITMEKAQKWVGQVVEILVEGESKKNASKFQGRTRTNHLVIIPKNERWRGEFLPVRIVETTGHTFYGTPLISGIDEALQFDLQEEINPAPIVS.

Residues 2–118 (PSVFIKTFGC…VAEIADNLLK (117 aa)) form the MTTase N-terminal domain. Residues Cys11, Cys47, Cys81, Cys159, Cys163, and Cys166 each coordinate [4Fe-4S] cluster. The Radical SAM core domain occupies 145-379 (TKAQPIAYVS…LEIQNKITME (235 aa)). Positions 382-445 (QKWVGQVVEI…GHTFYGTPLI (64 aa)) constitute a TRAM domain.

The protein belongs to the methylthiotransferase family. MiaB subfamily. As to quaternary structure, monomer. [4Fe-4S] cluster is required as a cofactor.

Its subcellular location is the cytoplasm. It catalyses the reaction N(6)-dimethylallyladenosine(37) in tRNA + (sulfur carrier)-SH + AH2 + 2 S-adenosyl-L-methionine = 2-methylsulfanyl-N(6)-dimethylallyladenosine(37) in tRNA + (sulfur carrier)-H + 5'-deoxyadenosine + L-methionine + A + S-adenosyl-L-homocysteine + 2 H(+). Functionally, catalyzes the methylthiolation of N6-(dimethylallyl)adenosine (i(6)A), leading to the formation of 2-methylthio-N6-(dimethylallyl)adenosine (ms(2)i(6)A) at position 37 in tRNAs that read codons beginning with uridine. The chain is tRNA-2-methylthio-N(6)-dimethylallyladenosine synthase from Methylacidiphilum infernorum (isolate V4) (Methylokorus infernorum (strain V4)).